Reading from the N-terminus, the 341-residue chain is Tetraacyldisaccharide 4'-kinase (341 aa).

Residue 57 to 64 (TVGGTGKT) coordinates ATP.

Belongs to the LpxK family.

The catalysed reaction is a lipid A disaccharide + ATP = a lipid IVA + ADP + H(+). It functions in the pathway glycolipid biosynthesis; lipid IV(A) biosynthesis; lipid IV(A) from (3R)-3-hydroxytetradecanoyl-[acyl-carrier-protein] and UDP-N-acetyl-alpha-D-glucosamine: step 6/6. Its function is as follows. Transfers the gamma-phosphate of ATP to the 4'-position of a tetraacyldisaccharide 1-phosphate intermediate (termed DS-1-P) to form tetraacyldisaccharide 1,4'-bis-phosphate (lipid IVA). This chain is Tetraacyldisaccharide 4'-kinase, found in Maricaulis maris (strain MCS10) (Caulobacter maris).